A 437-amino-acid chain; its full sequence is ATP-dependent protease ATPase subunit HslU (437 aa).

Residues Val-18, 60 to 65 (GCGKTE), Asp-250, Glu-315, and Arg-387 each bind ATP.

This sequence belongs to the ClpX chaperone family. HslU subfamily. A double ring-shaped homohexamer of HslV is capped on each side by a ring-shaped HslU homohexamer. The assembly of the HslU/HslV complex is dependent on binding of ATP.

Its subcellular location is the cytoplasm. Its function is as follows. ATPase subunit of a proteasome-like degradation complex; this subunit has chaperone activity. The binding of ATP and its subsequent hydrolysis by HslU are essential for unfolding of protein substrates subsequently hydrolyzed by HslV. HslU recognizes the N-terminal part of its protein substrates and unfolds these before they are guided to HslV for hydrolysis. The polypeptide is ATP-dependent protease ATPase subunit HslU (Methylorubrum extorquens (strain PA1) (Methylobacterium extorquens)).